The primary structure comprises 286 residues: 2-hydroxy-6-oxononadienedioate/2-hydroxy-6-oxononatrienedioate hydrolase 2 (286 aa).

Histidine 266 (proton acceptor) is an active-site residue.

Belongs to the AB hydrolase superfamily. MhpC family. Homodimer.

The enzyme catalyses (2Z,4E)-2-hydroxy-6-oxonona-2,4-dienedioate + H2O = (2Z)-2-hydroxypenta-2,4-dienoate + succinate + H(+). It catalyses the reaction (2Z,4E,7E)-2-hydroxy-6-oxonona-2,4,7-trienedioate + H2O = (2Z)-2-hydroxypenta-2,4-dienoate + fumarate + H(+). It participates in aromatic compound metabolism; 3-phenylpropanoate degradation. In terms of biological role, catalyzes the cleavage of the C5-C6 bond of 2-hydroxy-6-oxononadienedioate and 2-hydroxy-6-oxononatrienedioate, a dienol ring fission product of the bacterial meta-cleavage pathway for degradation of phenylpropionic acid. This chain is 2-hydroxy-6-oxononadienedioate/2-hydroxy-6-oxononatrienedioate hydrolase 2, found in Pseudomonas putida (Arthrobacter siderocapsulatus).